Here is a 243-residue protein sequence, read N- to C-terminus: Phosphoadenosine 5'-phosphosulfate reductase (243 aa).

Cys-239 acts as the Nucleophile; cysteine thiosulfonate intermediate in catalysis.

It belongs to the PAPS reductase family. CysH subfamily.

Its subcellular location is the cytoplasm. The enzyme catalyses [thioredoxin]-disulfide + sulfite + adenosine 3',5'-bisphosphate + 2 H(+) = [thioredoxin]-dithiol + 3'-phosphoadenylyl sulfate. Its pathway is sulfur metabolism; hydrogen sulfide biosynthesis; sulfite from sulfate: step 3/3. Its function is as follows. Catalyzes the formation of sulfite from phosphoadenosine 5'-phosphosulfate (PAPS) using thioredoxin as an electron donor. The protein is Phosphoadenosine 5'-phosphosulfate reductase of Erwinia tasmaniensis (strain DSM 17950 / CFBP 7177 / CIP 109463 / NCPPB 4357 / Et1/99).